The chain runs to 159 residues: MRTRAGMSEENPCPRNIFLLCKQYGLELEDLRLLCVYCRRALSDADVLAFAIKELSVVWRKGFPFGACGKCLIAAGKLRQYRHWHYSCYGDTVETETGIPIPQLFMRCYICHKPLSWEEKEALLVGNKRFHNISGRWTGHCMQCGSTCTAPDPASRTLH.

2 zinc fingers span residues 35-71 and 108-144; these read CVYCRRALSDADVLAFAIKELSVVWRKGFPFGACGKC and CYICHKPLSWEEKEALLVGNKRFHNISGRWTGHCMQC.

It belongs to the papillomaviridae E6 protein family. As to quaternary structure, forms homodimers. Interacts with ubiquitin-protein ligase UBE3A/E6-AP; this interaction stimulates UBE3A ubiquitin activity. Interacts with host TP53 and EP300; this interaction inhibits TP53 activity.

Its subcellular location is the host cytoplasm. The protein resides in the host nucleus. Functionally, plays a major role in the induction and maintenance of cellular transformation. E6 associates with host UBE3A/E6-AP ubiquitin-protein ligase and modulates its activity. Sequesters tumor suppressor TP53 in the host cytoplasm and modulates its activity by interacting with host EP300 that results in the reduction of TP53 acetylation and activation. In turn, apoptosis induced by DNA damage is inhibited. E6 also protects host keratinocytes from apoptosis by mediating the degradation of host BAK1. May also inhibit host immune response. The polypeptide is Protein E6 (Homo sapiens (Human)).